The primary structure comprises 432 residues: Ribosomal protein uS12 methylthiotransferase RimO (432 aa).

The 117-residue stretch at 4-120 folds into the MTTase N-terminal domain; it reads HNVFLLSLGC…LLQAIGAQYR (117 aa). Residues C13, C49, C83, C144, C148, and C151 each contribute to the [4Fe-4S] cluster site. The region spanning 130 to 359 is the Radical SAM core domain; it reads LTPPHISYLK…MELQETIAKE (230 aa). The region spanning 362 to 429 is the TRAM domain; the sequence is QLFEGKELTV…AYELHGTITA (68 aa).

The protein belongs to the methylthiotransferase family. RimO subfamily. Requires [4Fe-4S] cluster as cofactor.

The protein resides in the cytoplasm. The catalysed reaction is L-aspartate(89)-[ribosomal protein uS12]-hydrogen + (sulfur carrier)-SH + AH2 + 2 S-adenosyl-L-methionine = 3-methylsulfanyl-L-aspartate(89)-[ribosomal protein uS12]-hydrogen + (sulfur carrier)-H + 5'-deoxyadenosine + L-methionine + A + S-adenosyl-L-homocysteine + 2 H(+). In terms of biological role, catalyzes the methylthiolation of an aspartic acid residue of ribosomal protein uS12. This Chlorobium phaeobacteroides (strain DSM 266 / SMG 266 / 2430) protein is Ribosomal protein uS12 methylthiotransferase RimO.